We begin with the raw amino-acid sequence, 82 residues long: Penaeidin-3f (82 aa).

The N-terminal stretch at 1–19 is a signal peptide; the sequence is MRLVACLVFLASFALVCQG. Glutamine 20 is subject to Pyrrolidone carboxylic acid. Cystine bridges form between cysteine 51–cysteine 66, cysteine 55–cysteine 73, and cysteine 67–cysteine 74. A Serine amide modification is found at serine 81.

This sequence belongs to the penaeidin family.

It is found in the cytoplasmic granule. Its function is as follows. Antibacterial and antifungal activity. Presents chitin-binding activity. This chain is Penaeidin-3f, found in Penaeus vannamei (Whiteleg shrimp).